We begin with the raw amino-acid sequence, 435 residues long: Tol-Pal system protein TolB (435 aa).

The signal sequence occupies residues 1 to 26 (MKIFSPIRLVLAIAALMSVFSAPAFA).

It belongs to the TolB family. The Tol-Pal system is composed of five core proteins: the inner membrane proteins TolA, TolQ and TolR, the periplasmic protein TolB and the outer membrane protein Pal. They form a network linking the inner and outer membranes and the peptidoglycan layer.

Its subcellular location is the periplasm. Functionally, part of the Tol-Pal system, which plays a role in outer membrane invagination during cell division and is important for maintaining outer membrane integrity. The polypeptide is Tol-Pal system protein TolB (Agrobacterium fabrum (strain C58 / ATCC 33970) (Agrobacterium tumefaciens (strain C58))).